The following is a 488-amino-acid chain: Ergochrome gene cluster transcriptional regulator CPUR_05433 (488 aa).

The disordered stretch occupies residues 1–29 (MDHSIGGRNCQSGGTTASAPRSTGSDEFP). The span at 9-25 (NCQSGGTTASAPRSTGS) shows a compositional bias: polar residues. The segment at residues 36–63 (CHACSLSKVRCSKEKPSCSRCAKRGVPC) is a DNA-binding region (zn(2)-C6 fungal-type).

The protein localises to the nucleus. Its function is as follows. Transcription factor; part of the gene cluster responsible for the typical purple-black color of the ergot sclerotia. The ergochrome gene cluster produces several ergot pigments including the yellow ergochrome secalonic acid and its derivatives, as well as the red anthraquinones endocrocin and clavorubin. In Claviceps purpurea (strain 20.1) (Ergot fungus), this protein is Ergochrome gene cluster transcriptional regulator CPUR_05433.